We begin with the raw amino-acid sequence, 147 residues long: Probable 4-amino-4-deoxy-L-arabinose-phosphoundecaprenol flippase subunit ArnF (147 aa).

Residues 1-23 (MSNDHPQGQLPASPARSALKGYL) lie on the Cytoplasmic side of the membrane. Residues 24–44 (YVLGSILLVTAAQLGMKWGVI) form a helical membrane-spanning segment. The Periplasmic portion of the chain corresponds to 45 to 62 (QLPTWQMDLAVMLAHPLP). A helical transmembrane segment spans residues 63-83 (LLVILAGVGCYALSLLCWLAA). Over 84–93 (LHSTPLNIAY) the chain is Cytoplasmic. The chain crosses the membrane as a helical span at residues 94 to 114 (PLLSTSYALVYLLAVNIPLFA). The Periplasmic segment spans residues 115–121 (EPLEPGK). The helical transmembrane segment at 122–142 (ALGVLFILLGAVLVGIKPAAG) threads the bilayer. Residues 143 to 147 (TKQTG) lie on the Cytoplasmic side of the membrane.

It belongs to the ArnF family. Heterodimer of ArnE and ArnF.

The protein resides in the cell inner membrane. It functions in the pathway bacterial outer membrane biogenesis; lipopolysaccharide biosynthesis. Translocates 4-amino-4-deoxy-L-arabinose-phosphoundecaprenol (alpha-L-Ara4N-phosphoundecaprenol) from the cytoplasmic to the periplasmic side of the inner membrane. The polypeptide is Probable 4-amino-4-deoxy-L-arabinose-phosphoundecaprenol flippase subunit ArnF (Aeromonas hydrophila subsp. hydrophila (strain ATCC 7966 / DSM 30187 / BCRC 13018 / CCUG 14551 / JCM 1027 / KCTC 2358 / NCIMB 9240 / NCTC 8049)).